The sequence spans 429 residues: Adenylosuccinate synthetase (429 aa).

GTP contacts are provided by residues 12 to 18 (GDEGKGK) and 40 to 42 (GHT). Asp13 functions as the Proton acceptor in the catalytic mechanism. 2 residues coordinate Mg(2+): Asp13 and Gly40. IMP is bound by residues 13-16 (DEGK), 38-41 (NAGH), Thr129, Arg143, Gln223, Thr238, and Arg302. The active-site Proton donor is His41. Substrate is bound at residue 298 to 304 (TVTGRPR). GTP-binding positions include Arg304, 330 to 332 (KLD), and 412 to 414 (STS).

Belongs to the adenylosuccinate synthetase family. As to quaternary structure, homodimer. Mg(2+) is required as a cofactor.

It is found in the cytoplasm. It catalyses the reaction IMP + L-aspartate + GTP = N(6)-(1,2-dicarboxyethyl)-AMP + GDP + phosphate + 2 H(+). Its pathway is purine metabolism; AMP biosynthesis via de novo pathway; AMP from IMP: step 1/2. Plays an important role in the de novo pathway of purine nucleotide biosynthesis. Catalyzes the first committed step in the biosynthesis of AMP from IMP. The protein is Adenylosuccinate synthetase of Paramagnetospirillum magneticum (strain ATCC 700264 / AMB-1) (Magnetospirillum magneticum).